We begin with the raw amino-acid sequence, 129 residues long: Histone H2A.2 (129 aa).

K5 bears the N6-acetyllysine mark. Q108 is modified (N5-methylglutamine).

It belongs to the histone H2A family. The nucleosome is a histone octamer containing two molecules each of H2A, H2B, H3 and H4 assembled in one H3-H4 heterotetramer and two H2A-H2B heterodimers. The octamer wraps approximately 147 bp of DNA. Post-translationally, acetylated by ESA1 to form H2AK4ac.

It is found in the nucleus. The protein resides in the chromosome. Functionally, core component of nucleosome which plays a central role in DNA double strand break (DSB) repair. Nucleosomes wrap and compact DNA into chromatin, limiting DNA accessibility to the cellular machineries which require DNA as a template. Histones thereby play a central role in transcription regulation, DNA repair, DNA replication and chromosomal stability. DNA accessibility is regulated via a complex set of post-translational modifications of histones, also called histone code, and nucleosome remodeling. The chain is Histone H2A.2 (HTA2) from Lodderomyces elongisporus (strain ATCC 11503 / CBS 2605 / JCM 1781 / NBRC 1676 / NRRL YB-4239) (Yeast).